A 61-amino-acid polypeptide reads, in one-letter code: Large ribosomal subunit protein eL37 (61 aa).

The Zn(2+) site is built by C19, C22, C34, and C37. The segment at 19–37 (CRRCGRNSFNARKGYCAAC) adopts a C4-type zinc-finger fold.

The protein belongs to the eukaryotic ribosomal protein eL37 family. Zn(2+) serves as cofactor.

Functionally, binds to the 23S rRNA. The protein is Large ribosomal subunit protein eL37 of Sulfolobus acidocaldarius (strain ATCC 33909 / DSM 639 / JCM 8929 / NBRC 15157 / NCIMB 11770).